Here is a 994-residue protein sequence, read N- to C-terminus: Valine--tRNA ligase (994 aa).

A 'HIGH' region motif is present at residues 43–53 (PNVTGTLHMGH). Residues 329-345 (QSGMPSGATSDTTNTPS) show a composition bias toward polar residues. The segment at 329-355 (QSGMPSGATSDTTNTPSDPEASSAANQ) is disordered. A 'KMSKS' region motif is present at residues 585–589 (KMSKS). An ATP-binding site is contributed by lysine 588. The interval 692–714 (AHSPAQHQAGQDGQDAPRTPQPR) is disordered. The segment covering 696–707 (AQHQAGQDGQDA) has biased composition (low complexity). The stretch at 928 to 994 (LIDVDAERVR…NGLRERRATL (67 aa)) forms a coiled coil.

This sequence belongs to the class-I aminoacyl-tRNA synthetase family. ValS type 1 subfamily. As to quaternary structure, monomer.

Its subcellular location is the cytoplasm. The enzyme catalyses tRNA(Val) + L-valine + ATP = L-valyl-tRNA(Val) + AMP + diphosphate. In terms of biological role, catalyzes the attachment of valine to tRNA(Val). As ValRS can inadvertently accommodate and process structurally similar amino acids such as threonine, to avoid such errors, it has a 'posttransfer' editing activity that hydrolyzes mischarged Thr-tRNA(Val) in a tRNA-dependent manner. The chain is Valine--tRNA ligase from Xylella fastidiosa (strain 9a5c).